We begin with the raw amino-acid sequence, 288 residues long: Transmembrane protein 163 (288 aa).

Residues 1–64 (MEPALGSERR…ESGQFSDGLE (64 aa)) form a disordered region. At 1–87 (MEPALGSERR…HEAQNYRKKA (87 aa)) the chain is on the cytoplasmic side. Phosphoserine is present on S11. The span at 12 to 24 (PPGPGVPRPPPRG) shows a compositional bias: pro residues. The segment covering 25–42 (HAPSTAAPAPSPAPMSSS) has biased composition (low complexity). The required for interaction with MCOLN1 stretch occupies residues 41-71 (SSVQSDEERQPRISESGQFSDGLEDRGLLES). Phosphoserine occurs at positions 45, 54, 56, and 60. The chain crosses the membrane as a helical span at residues 88–108 (LWVSWLSIIVTLALAVAAFTV). The Extracellular segment spans residues 109–115 (SVMRYSA). The helical transmembrane segment at 116–136 (SAFGFAFDAILDVLSSAIVLW) threads the bilayer. At 137-149 (RYSNAAAVHSANR) the chain is on the cytoplasmic side. A helical membrane pass occupies residues 150–170 (EYIACVILGVIFLLSSICIVV). Topologically, residues 171-186 (KAIHDLSTRLLPEVDD) are extracellular. Residues 187–207 (FLFSVSILSGILCSVLAVLKF) form a helical membrane-spanning segment. At 208 to 216 (MLGKVLTSR) the chain is on the cytoplasmic side. A helical membrane pass occupies residues 217–237 (ALITDGFNSLVGGVMGFSILL). The Extracellular portion of the chain corresponds to 238–254 (SAEVFKHNAAVWYLDGS). The chain crosses the membrane as a helical span at residues 255–275 (IGVLIGLTIFAYGVKLLIDMV). The Cytoplasmic portion of the chain corresponds to 276–288 (PRVRQTRHYEMFE).

The protein belongs to the TMEM163 family. Homodimer. Interacts with MCOLN1. Interacts with SLC30A1, SLC30A2, SLC30A3 and SLC30A4. As to expression, widely expressed, with high expression in the brain, cerebellum, heart, lung and spleen. In the brain, mainly expressed in the glutaminergic neuron subpopulations.

Its subcellular location is the cytoplasmic vesicle. The protein resides in the secretory vesicle. It localises to the synaptic vesicle membrane. The protein localises to the early endosome membrane. It is found in the late endosome membrane. Its subcellular location is the lysosome membrane. The protein resides in the cell membrane. The catalysed reaction is Zn(2+)(in) = Zn(2+)(out). Functionally, zinc ion transporter that mediates zinc efflux and plays a crucial role in intracellular zinc homeostasis. Binds the divalent cations Zn(2+), Ni(2+), and to a minor extent Cu(2+). Is a functional modulator of P2X purinoceptors, including P2RX1, P2RX3, P2RX4 and P2RX7. Plays a role in central nervous system development and is required for myelination, and survival and proliferation of oligodendrocytes. The chain is Transmembrane protein 163 (Tmem163) from Mus musculus (Mouse).